Reading from the N-terminus, the 1081-residue chain is FHIP family protein GA25918 (1081 aa).

Polar residues predominate over residues 1–11; that stretch reads MSWLRSSPLRQ. 5 disordered regions span residues 1–31, 504–524, 650–685, 830–913, and 933–1027; these read MSWLRSSPLRQSGNGGGGGVSTGHSSTGSLR, ARPKSVHEQQAPSGATGEQPI, ADEESDATDLTVTTTTASEADLEHNSSSVSSGMGGG, NENS…AASS, and NNNN…SEPA. At serine 508 the chain carries Phosphoserine. A compositionally biased stretch (low complexity) spans 657-668; sequence TDLTVTTTTASE. Position 833 is a phosphoserine (serine 833). The span at 840–856 shows a compositional bias: low complexity; it reads QPQTTLSQQQQQQQGQQ. The span at 857–876 shows a compositional bias: polar residues; the sequence is RSAYATLSAATPVQATQTSA. 2 stretches are compositionally biased toward low complexity: residues 891–913 and 933–953; these read SKSISSMFSRRSTPNPPSSAASS and NNNNSGSGGQSQPFSSTGTGT. Residues 954 to 963 are compositionally biased toward polar residues; sequence CETSLSTNPQ. Positions 964-993 are enriched in low complexity; that stretch reads SGAAAARSTGTATTANGNSSNSNISIGGST. A compositionally biased stretch (polar residues) spans 994-1010; sequence QTLSGHSNTTTYSSSTL.

The protein belongs to the FHIP family.

In Drosophila pseudoobscura pseudoobscura (Fruit fly), this protein is FHIP family protein GA25918.